The sequence spans 478 residues: Protein nucleotidyltransferase YdiU (478 aa).

ATP-binding residues include G74, G76, R77, K97, D109, G110, R160, and R167. Residue D236 is the Proton acceptor of the active site. Mg(2+) is bound by residues N237 and D246. D246 is an ATP binding site.

The protein belongs to the SELO family. The cofactor is Mg(2+). Requires Mn(2+) as cofactor.

It carries out the reaction L-seryl-[protein] + ATP = 3-O-(5'-adenylyl)-L-seryl-[protein] + diphosphate. The enzyme catalyses L-threonyl-[protein] + ATP = 3-O-(5'-adenylyl)-L-threonyl-[protein] + diphosphate. It catalyses the reaction L-tyrosyl-[protein] + ATP = O-(5'-adenylyl)-L-tyrosyl-[protein] + diphosphate. The catalysed reaction is L-histidyl-[protein] + UTP = N(tele)-(5'-uridylyl)-L-histidyl-[protein] + diphosphate. It carries out the reaction L-seryl-[protein] + UTP = O-(5'-uridylyl)-L-seryl-[protein] + diphosphate. The enzyme catalyses L-tyrosyl-[protein] + UTP = O-(5'-uridylyl)-L-tyrosyl-[protein] + diphosphate. Functionally, nucleotidyltransferase involved in the post-translational modification of proteins. It can catalyze the addition of adenosine monophosphate (AMP) or uridine monophosphate (UMP) to a protein, resulting in modifications known as AMPylation and UMPylation. The sequence is that of Protein nucleotidyltransferase YdiU from Chromobacterium violaceum (strain ATCC 12472 / DSM 30191 / JCM 1249 / CCUG 213 / NBRC 12614 / NCIMB 9131 / NCTC 9757 / MK).